The following is a 393-amino-acid chain: Acyltransferase ato1 (393 aa).

The protein belongs to the lysine N-acyltransferase mbtK family.

Its pathway is siderophore biosynthesis; ferrichrome biosynthesis. L-ornithine N(5)-monooxygenase; part of the siderophore biosynthetic pathway. Omphalotus olearius produces ferrichrome A, but no other siderophore has been detected. Ferrichrome A consists of a hexapeptide ring made up of one glycine, two serine, and three N(5)-hydroxyornithine amino acid residues, the latter acylated by trans-(alpha-methyl)-glutaconic acid residues. The biosynthesis of ferrichrome A depends on the hydroxylation of ornithine to N(5)-hydroxyornithine, catalyzed by the monooxygenase omo1. The second step, the acylation of N(5)-hydroxy-L-ornithine is probably catalyzed by the N-acyltransferase ato1. Finally, assembly of ferrichrome A is catalyzed by the nonribosomal peptide synthase (NRPS) fso1. The chain is Acyltransferase ato1 from Omphalotus olearius (Jack o'lantern).